Consider the following 339-residue polypeptide: Protein FAM50A (339 aa).

The segment at 1-31 is disordered; the sequence is MAQYKGAASEAGRAMHLMKKREKQREQMEQM. Ala-2 is modified (N-acetylalanine). A Glycyl lysine isopeptide (Lys-Gly) (interchain with G-Cter in SUMO2) cross-link involves residue Lys-100. Positions 121-177 are disordered; the sequence is SFTLEEEEEGGEEEEEAAMYEEEMEREEITTKKRKLGKNPDVDTSFLPDRDREEEEN. The segment covering 124–146 has biased composition (acidic residues); it reads LEEEEEGGEEEEEAAMYEEEMER. Positions 152-155 match the Nuclear localization signal motif; sequence KKRK. Basic and acidic residues predominate over residues 168–177; that stretch reads PDRDREEEEN.

Belongs to the FAM50 family. As to quaternary structure, interacts with EFTUD2, a component of the spliceosome U5 complex. Interacts with DDX41, a component of the spliceosome C complex. As to expression, widely expressed in fetal and adult tissues. Mostly abundant in fetal brain, liver and kidney; in the adult, high levels were also observed in heart, skeletal muscle, spleen, thymus, prostate and small intestine. Expressed in fetal cerebellum and hypothalamus. Low expression is observed in fetal temporal lobe.

It localises to the nucleus. Probably involved in the regulation of pre-mRNA splicing. The protein is Protein FAM50A (FAM50A) of Homo sapiens (Human).